The sequence spans 271 residues: Calretinin (271 aa).

EF-hand domains lie at 16-51 (LTAS…LEKA), 63-98 (NFGE…EENF), 107-142 (GSSA…LLKK), 151-186 (KLQE…QENF), 195-230 (LTSE…LYEK), and 235-270 (MNIQ…SEPP). Ca(2+) is bound by residues Asp-29, Asp-31, Asn-33, Tyr-35, Glu-40, Asp-76, Asn-78, Asp-80, Lys-82, Glu-87, Asp-120, Asp-122, Ser-124, Tyr-126, Glu-131, Asp-164, Asn-166, Asp-168, Lys-170, Glu-175, Asp-208, Asp-210, Ser-212, Tyr-214, and Glu-219. A Phosphotyrosine modification is found at Tyr-214.

This sequence belongs to the calbindin family.

It is found in the synapse. The protein localises to the cell projection. It localises to the dendrite. Its function is as follows. Calcium-binding protein involved in calcium homeostasis and signal transduction. It plays a critical role in buffering intracellular calcium levels and modulating calcium-dependent signaling pathways. Predominantly expressed in specific neuronal populations, influences synaptic plasticity and neuronal excitability, contributing to learning and memory. During embryonic development, it facilitates neuronal differentiation and maturation. In Rattus norvegicus (Rat), this protein is Calretinin (Calb2).